Here is a 247-residue protein sequence, read N- to C-terminus: Proteasome subunit alpha type-7-B (247 aa).

This sequence belongs to the peptidase T1A family. As to quaternary structure, the 26S proteasome consists of a 20S proteasome core and two 19S regulatory subunits. The 20S proteasome core is composed of 28 subunits that are arranged in four stacked rings, resulting in a barrel-shaped structure. The two end rings are each formed by seven alpha subunits, and the two central rings are each formed by seven beta subunits. The catalytic chamber with the active sites is on the inside of the barrel. Post-translationally, phosphorylated in G2 phase.

The protein resides in the cytoplasm. It localises to the nucleus. Its function is as follows. The proteasome is a multicatalytic proteinase complex which is characterized by its ability to cleave peptides with Arg, Phe, Tyr, Leu, and Glu adjacent to the leaving group at neutral or slightly basic pH. The proteasome has an ATP-dependent proteolytic activity. The protein is Proteasome subunit alpha type-7-B (psma7-b) of Xenopus laevis (African clawed frog).